Consider the following 286-residue polypeptide: Flagellin FlaB2 (286 aa).

The protein belongs to the bacterial flagellin family. In terms of assembly, the flagellum consists of an outer layer composed of repeating units of FlaA around a core that contains several antigenically related polypeptides. Interacts with FliW; a synthetic peptide of FlaB1 (residues 229-247) partially blocks binding of this protein to FliW.

The protein resides in the periplasmic flagellum. It is found in the periplasm. Component of the core of the flagella. The sequence is that of Flagellin FlaB2 from Treponema pallidum (strain Nichols).